A 552-amino-acid polypeptide reads, in one-letter code: HTH-type transcriptional regulator SgrR (552 aa).

A solute-binding region spans residues 163–493 (ELKPDLAHHW…DDLDTDAQQW (331 aa)).

Its function is as follows. Activates the small RNA gene sgrS under glucose-phosphate stress conditions as well as yfdZ. Represses its own transcription under both stress and non-stress conditions. Might act as a sensor of the intracellular accumulation of phosphoglucose by binding these molecules in its C-terminal solute-binding domain. In Pectobacterium atrosepticum (strain SCRI 1043 / ATCC BAA-672) (Erwinia carotovora subsp. atroseptica), this protein is HTH-type transcriptional regulator SgrR.